The sequence spans 164 residues: Protein eva-1 homolog B (164 aa).

A helical transmembrane segment spans residues 29 to 49 (GLYFVLGVCFGLLLTLCLLVI). The disordered stretch occupies residues 56–110 (RSRPRTPAPRRDPRSSTLEPEDEDDEEDEDTMTRLGPDDTLQGQELSTEPDGPLS). Over residues 74-85 (EPEDEDDEEDED) the composition is skewed to acidic residues. Residues threonine 86, threonine 149, and threonine 157 each carry the phosphothreonine modification.

The protein belongs to the EVA1 family.

It is found in the membrane. The protein is Protein eva-1 homolog B (Eva1b) of Mus musculus (Mouse).